Reading from the N-terminus, the 433-residue chain is E3 ubiquitin-protein ligase RNF26 (433 aa).

5 helical membrane-spanning segments follow: residues 24 to 44, 60 to 80, 147 to 169, 183 to 203, and 220 to 240; these read LNFL…AFVY, GVLL…CGGL, VINS…VLAL, VVAA…ILLW, and LASF…VLAV. The RING-type zinc finger occupies 380-422; that stretch reads CVICQDQSKTVLLLPCRHLCLCQACTEILMRHPVYHRNCPLCR.

Interacts with INCA1. Interacts with TMEM43, ENDOD1, TMEM33 and TMED1 to form a complex capable of modulating innate immune signaling through the cGAS-STING pathway. Interacts with UBE2J1; this interaction is important for SQSTM1 ubiquitination. As to expression, ubiquitous. Up-regulated in several cancer cell lines.

It localises to the endoplasmic reticulum membrane. The enzyme catalyses S-ubiquitinyl-[E2 ubiquitin-conjugating enzyme]-L-cysteine + [acceptor protein]-L-lysine = [E2 ubiquitin-conjugating enzyme]-L-cysteine + N(6)-ubiquitinyl-[acceptor protein]-L-lysine.. The protein operates within protein modification; protein ubiquitination. Functionally, E3 ubiquitin-protein ligase that plays a key role in endosome organization by retaining vesicles in the perinuclear cloud. Acts as a platform for perinuclear positioning of the endosomal system by mediating ubiquitination of SQSTM1 through interaction with the ubiquitin conjugating enzyme UBE2J1. Ubiquitinated SQSTM1 attracts specific vesicle-associated adapters, forming a molecular bridge that restrains cognate vesicles in the perinuclear region and organizes the endosomal pathway for efficient cargo transport. Also acts as a regulator of type I interferon production in response to viral infection by mediating the formation of 'Lys-11'-linked polyubiquitin chains on TMEM173/STING, leading to stabilize TMEM173/STING. Also required to limit type I interferon response by promoting autophagic degradation of IRF3. This chain is E3 ubiquitin-protein ligase RNF26, found in Homo sapiens (Human).